A 183-amino-acid polypeptide reads, in one-letter code: Fetal and adult testis-expressed transcript protein (183 aa).

Positions 42 to 66 (SRSRGASQKKQKLEQKAAGSASAKR) are disordered. The helical transmembrane segment at 163–181 (TLIIAVLVSASIANLWLWM) threads the bilayer.

As to quaternary structure, interacts with BIK and RNF183. Interacts with IMMT/MIC60and EMD. Testis-specific in fetus (aged from 6 to 11 weeks). In adult, expressed predominantly in testis, with some expression in lung, heart, kidney, adrenal gland and whole brain. Highly expressed in certain types of cancer tissues such as hepatocellular carcinoma, colon and gastric cancer. Weakly expressed in normal pancreas.

It is found in the mitochondrion. Its subcellular location is the mitochondrion outer membrane. The protein resides in the endoplasmic reticulum membrane. Functionally, involved in the regulation of endoplasmic reticulum (ER)-mitochondria coupling. Negatively regulates the ER-mitochondria distance and Ca(2+) transfer from ER to mitochondria possibly implicating it in the regulation of apoptosis. May collaborate with RNF183 to restrain BIK protein levels thus regulating apoptotic signaling. This chain is Fetal and adult testis-expressed transcript protein (FATE1), found in Homo sapiens (Human).